Consider the following 188-residue polypeptide: MRVIASSIRKGNVLEQDGKLYVVLSAENIHPGKGTPVSQIEMRRISDGVKISERYKTTDHVEKVTIEERNYSFLYEDGEGFHFMEPESYDQVQVTKDVVGSAAPYLQEGMVVKLSMHDTTAVAITLPQRATLEVVDTEPVTKGQTASSSYKPAVLSNGVRTQVPPHIGTGTRIVVLTEDGSYVERAKD.

This sequence belongs to the elongation factor P family.

Its subcellular location is the cytoplasm. It functions in the pathway protein biosynthesis; polypeptide chain elongation. In terms of biological role, involved in peptide bond synthesis. Stimulates efficient translation and peptide-bond synthesis on native or reconstituted 70S ribosomes in vitro. Probably functions indirectly by altering the affinity of the ribosome for aminoacyl-tRNA, thus increasing their reactivity as acceptors for peptidyl transferase. This chain is Elongation factor P, found in Rhodopseudomonas palustris (strain TIE-1).